The following is a 315-amino-acid chain: Transcription antitermination protein NusB (315 aa).

The disordered stretch occupies residues 296 to 315 (SANFDTKSAELNDADEKSQD). Over residues 302-315 (KSAELNDADEKSQD) the composition is skewed to basic and acidic residues.

The protein belongs to the NusB family.

Involved in transcription antitermination. Required for transcription of ribosomal RNA (rRNA) genes. Binds specifically to the boxA antiterminator sequence of the ribosomal RNA (rrn) operons. This is Transcription antitermination protein NusB from Psychrobacter cryohalolentis (strain ATCC BAA-1226 / DSM 17306 / VKM B-2378 / K5).